Consider the following 114-residue polypeptide: uncharacterized protein (114 aa).

A compositionally biased stretch (basic and acidic residues) spans 1–20; that stretch reads MGLSRWHDKNSRPAEEKSEE. Residues 1-22 form a disordered region; sequence MGLSRWHDKNSRPAEEKSEEMQ.

Functionally, may be involved in phosphatase regulation and/or generation of precursor metabolites and energy. This is an uncharacterized protein from Saccharomyces cerevisiae (strain ATCC 204508 / S288c) (Baker's yeast).